The primary structure comprises 110 residues: UPF0122 protein YlxM (110 aa).

It belongs to the UPF0122 family.

Functionally, might take part in the signal recognition particle (SRP) pathway. This is inferred from the conservation of its genetic proximity to ftsY/ffh. May be a regulatory protein. The protein is UPF0122 protein YlxM (ylxM) of Bacillus subtilis (strain 168).